The sequence spans 436 residues: Na(+)/H(+) antiporter NhaA 2 (436 aa).

Transmembrane regions (helical) follow at residues 35 to 55 (FGGGLLLLGAVLALLWANSPW), 80 to 100 (LATWAADGLLAIFFFVVGLEL), 116 to 136 (ALPVVAAIGGMIVPALIYVGI), 147 to 167 (GWAIPTATDIAFALAVLAVIG), 176 to 196 (AFLLTLAVVDDLLAITVIAIF), 201 to 221 (FKLTPLLVALLPIALFGLLVQ), 226 to 246 (WWWALIPLAVVAWTLVHESGV), 283 to 303 (VSAGFAVPVFAFFAAGVSLRG), 313 to 333 (PIVVGIVAGLVLGKVLGIFGS), 354 to 374 (LLGVSLLAGIGFTVSLLIGEL), and 385 to 405 (VKAAVLTGSVIAALLASAVLS).

Belongs to the NhaA Na(+)/H(+) (TC 2.A.33) antiporter family.

It is found in the cell membrane. It carries out the reaction Na(+)(in) + 2 H(+)(out) = Na(+)(out) + 2 H(+)(in). Functionally, na(+)/H(+) antiporter that extrudes sodium in exchange for external protons. This is Na(+)/H(+) antiporter NhaA 2 from Salinispora arenicola (strain CNS-205).